The sequence spans 212 residues: Tubulin alpha chain (212 aa).

N3 and N25 together coordinate GTP. The active site involves E51.

It belongs to the tubulin family. Dimer of alpha and beta chains. A typical microtubule is a hollow water-filled tube with an outer diameter of 25 nm and an inner diameter of 15 nM. Alpha-beta heterodimers associate head-to-tail to form protofilaments running lengthwise along the microtubule wall with the beta-tubulin subunit facing the microtubule plus end conferring a structural polarity. Microtubules usually have 13 protofilaments but different protofilament numbers can be found in some organisms and specialized cells. Mg(2+) serves as cofactor.

It is found in the cytoplasm. The protein localises to the cytoskeleton. The enzyme catalyses GTP + H2O = GDP + phosphate + H(+). In terms of biological role, tubulin is the major constituent of microtubules, a cylinder consisting of laterally associated linear protofilaments composed of alpha- and beta-tubulin heterodimers. Microtubules grow by the addition of GTP-tubulin dimers to the microtubule end, where a stabilizing cap forms. Below the cap, tubulin dimers are in GDP-bound state, owing to GTPase activity of alpha-tubulin. The protein is Tubulin alpha chain (TUB-A) of Pneumocystis carinii.